A 269-amino-acid polypeptide reads, in one-letter code: Interleukin-1 beta (269 aa).

A propeptide spans 1–116 (MAEVPELASE…TWDNEAYVHD (116 aa)) (removed in mature form; by CASP1). The Involved in interaction with TMED10 C-terminus signature appears at 228-241 (FESAQFPNWYISTS).

Belongs to the IL-1 family. As to quaternary structure, monomer. In its precursor form, weakly interacts with full-length MEFV; the mature cytokine does not interact at all. Interacts with integrins ITGAV:ITGBV and ITGA5:ITGB1; integrin-binding is required for IL1B signaling. Interacts with cargo receptor TMED10; the interaction is direct and is required for the secretion of IL1B mature form. Interacts with HSP90AB1; the interaction facilitates cargo translocation into the ERGIC. Interacts with HSP90B1; the interaction facilitates cargo translocation into the ERGIC. In terms of processing, activation of the IL1B precursor involves a CASP1-catalyzed proteolytic cleavage. Processing and secretion are temporarily associated. Post-translationally, (Microbial infection) Cleavage by S.pyogenes cysteine protease SpeB promotes its activation independently of CASP1. As to expression, expressed in activated monocytes/macrophages (at protein level).

Its subcellular location is the cytoplasm. It is found in the cytosol. The protein resides in the secreted. It localises to the lysosome. The protein localises to the extracellular exosome. (Microbial infection) Cleavage by S.pyogenes cysteine protease SpeB promotes its activation independently of CASP1. SpeB-mediated maturation of IL1B plays a dual role depending on infection site: while IL1B inflammatory response prevents bacterial growth during invasive skin infections, it promotes streptococcal infection of the nasopharynx by disrupting colonization resistance mediated by the microbiota. Functionally, potent pro-inflammatory cytokine. Initially discovered as the major endogenous pyrogen, induces prostaglandin synthesis, neutrophil influx and activation, T-cell activation and cytokine production, B-cell activation and antibody production, and fibroblast proliferation and collagen production. Promotes Th17 differentiation of T-cells. Synergizes with IL12/interleukin-12 to induce IFNG synthesis from T-helper 1 (Th1) cells. Plays a role in angiogenesis by inducing VEGF production synergistically with TNF and IL6. Involved in transduction of inflammation downstream of pyroptosis: its mature form is specifically released in the extracellular milieu by passing through the gasdermin-D (GSDMD) pore. Acts as a sensor of S.pyogenes infection in skin: cleaved and activated by pyogenes SpeB protease, leading to an inflammatory response that prevents bacterial growth during invasive skin infection. This Homo sapiens (Human) protein is Interleukin-1 beta.